Consider the following 247-residue polypeptide: 3,4-dihydroxy-2-butanone 4-phosphate synthase (247 aa).

Residues 38 to 39, Asp43, 179 to 183, and Glu203 each bind D-ribulose 5-phosphate; these read RE and RMGQT. Glu39 serves as a coordination point for Mg(2+).

It belongs to the DHBP synthase family. Homodimer. It depends on Mg(2+) as a cofactor. Mn(2+) is required as a cofactor.

The enzyme catalyses D-ribulose 5-phosphate = (2S)-2-hydroxy-3-oxobutyl phosphate + formate + H(+). It participates in cofactor biosynthesis; riboflavin biosynthesis; 2-hydroxy-3-oxobutyl phosphate from D-ribulose 5-phosphate: step 1/1. In terms of biological role, catalyzes the conversion of D-ribulose 5-phosphate to formate and 3,4-dihydroxy-2-butanone 4-phosphate. This is 3,4-dihydroxy-2-butanone 4-phosphate synthase from Methanosarcina mazei (strain ATCC BAA-159 / DSM 3647 / Goe1 / Go1 / JCM 11833 / OCM 88) (Methanosarcina frisia).